Here is a 152-residue protein sequence, read N- to C-terminus: SsrA-binding protein (152 aa).

This sequence belongs to the SmpB family.

It localises to the cytoplasm. Functionally, required for rescue of stalled ribosomes mediated by trans-translation. Binds to transfer-messenger RNA (tmRNA), required for stable association of tmRNA with ribosomes. tmRNA and SmpB together mimic tRNA shape, replacing the anticodon stem-loop with SmpB. tmRNA is encoded by the ssrA gene; the 2 termini fold to resemble tRNA(Ala) and it encodes a 'tag peptide', a short internal open reading frame. During trans-translation Ala-aminoacylated tmRNA acts like a tRNA, entering the A-site of stalled ribosomes, displacing the stalled mRNA. The ribosome then switches to translate the ORF on the tmRNA; the nascent peptide is terminated with the 'tag peptide' encoded by the tmRNA and targeted for degradation. The ribosome is freed to recommence translation, which seems to be the essential function of trans-translation. In Helicobacter pylori (strain HPAG1), this protein is SsrA-binding protein.